The primary structure comprises 147 residues: ATP synthase epsilon chain 2 (147 aa).

It belongs to the ATPase epsilon chain family. F-type ATPases have 2 components, CF(1) - the catalytic core - and CF(0) - the membrane proton channel. CF(1) has five subunits: alpha(3), beta(3), gamma(1), delta(1), epsilon(1). CF(0) has three main subunits: a, b and c.

The protein resides in the cell inner membrane. Functionally, produces ATP from ADP in the presence of a proton gradient across the membrane. This is ATP synthase epsilon chain 2 from Photobacterium profundum (strain SS9).